Reading from the N-terminus, the 529-residue chain is MSELIEHANAIEWRFERQILRLEPWGKNSLRVRATCAPEFTSALHALLTPESCQAEILRDAETLTLRNGNISAVLNLKGQLAFYNQRGELLLEEMWRQRSTVGIGASEKSQDKYVSALKLDGREFKPLPGGKYQLTVRFEARQGEKLYGMGQYQQPWLDLKGCSLELAQRNSQASVPFVQSSLGYGLLWNNPAIGEASFAKNHSQWTSRVTQEMDYWITAGDSVMEITRQYAKATGTPPAAPEFISGLWQCKLRYRTQQEVLDVAREYHRRNLPLSVMVIDFFHWPNQGTWCFDPVDWPDPRAMVEELESMGIRLMVSVWPTVEARSPLFPQMKAKGWLVTSDRGVQVNLDFMGNTTFFDATHPQARQFVWDTVKKNYFDYGIKLFWLDEAEPEYRAYDFDNYRYHAGPVLEVGNRYPRDFAQGFYDGLRAEGENEIVNLVRCSWAGSQRYGVLAWSGDVHSSFHSFRNQLAAGLNMGLAGIPWWTTDIGGFQGGNIHDPAFHELLIRWFQWAVFCPVLRMHGYREPRI.

Residue Asp389 is the Nucleophile of the active site. Glu392 is a catalytic residue. Asp459 acts as the Proton donor in catalysis.

This sequence belongs to the glycosyl hydrolase 31 family.

This is an uncharacterized protein from Pseudescherichia vulneris (Escherichia vulneris).